The chain runs to 360 residues: NADH-quinone oxidoreductase subunit H (360 aa).

Transmembrane regions (helical) follow at residues 22-42 (ITVG…IPLI), 97-117 (ALFY…WAVI), 130-150 (IGLL…IIAG), 170-190 (ISYE…SGSM), 208-228 (VFSW…ISAV), 255-275 (GFAF…IAAL), 292-312 (WGFI…AVLY), and 336-356 (VLIP…ISPL).

It belongs to the complex I subunit 1 family. As to quaternary structure, NDH-1 is composed of 14 different subunits. Subunits NuoA, H, J, K, L, M, N constitute the membrane sector of the complex.

The protein resides in the cell inner membrane. It catalyses the reaction a quinone + NADH + 5 H(+)(in) = a quinol + NAD(+) + 4 H(+)(out). Its function is as follows. NDH-1 shuttles electrons from NADH, via FMN and iron-sulfur (Fe-S) centers, to quinones in the respiratory chain. The immediate electron acceptor for the enzyme in this species is believed to be ubiquinone. Couples the redox reaction to proton translocation (for every two electrons transferred, four hydrogen ions are translocated across the cytoplasmic membrane), and thus conserves the redox energy in a proton gradient. This subunit may bind ubiquinone. In Neisseria meningitidis serogroup C / serotype 2a (strain ATCC 700532 / DSM 15464 / FAM18), this protein is NADH-quinone oxidoreductase subunit H.